The sequence spans 268 residues: uncharacterized protein (268 aa).

The RING-type; degenerate zinc finger occupies 21–61; the sequence is CVICLQKDGLRAQLSPCGHDQFDYSCICRWMDQSLTCPICK.

Its subcellular location is the mitochondrion. The protein resides in the nucleus. This is an uncharacterized protein from Schizosaccharomyces pombe (strain 972 / ATCC 24843) (Fission yeast).